The primary structure comprises 347 residues: Ketol-acid reductoisomerase (NADP(+)) (347 aa).

Positions 3–182 (TKMFYDKDID…GSGRAGILET (180 aa)) constitute a KARI N-terminal Rossmann domain. NADP(+) contacts are provided by residues 26–29 (YGAQ), Arg-49, Ser-53, and 83–86 (DELQ). The active site involves His-108. Residue Gly-134 participates in NADP(+) binding. The region spanning 183 to 328 (TFEEETTEDL…KKVRAMMPWI (146 aa)) is the KARI C-terminal knotted domain. Mg(2+) contacts are provided by Asp-191, Glu-195, Glu-227, and Glu-231. Ser-252 is a substrate binding site.

Belongs to the ketol-acid reductoisomerase family. Mg(2+) is required as a cofactor.

It catalyses the reaction (2R)-2,3-dihydroxy-3-methylbutanoate + NADP(+) = (2S)-2-acetolactate + NADPH + H(+). The enzyme catalyses (2R,3R)-2,3-dihydroxy-3-methylpentanoate + NADP(+) = (S)-2-ethyl-2-hydroxy-3-oxobutanoate + NADPH + H(+). The protein operates within amino-acid biosynthesis; L-isoleucine biosynthesis; L-isoleucine from 2-oxobutanoate: step 2/4. It functions in the pathway amino-acid biosynthesis; L-valine biosynthesis; L-valine from pyruvate: step 2/4. In terms of biological role, involved in the biosynthesis of branched-chain amino acids (BCAA). Catalyzes an alkyl-migration followed by a ketol-acid reduction of (S)-2-acetolactate (S2AL) to yield (R)-2,3-dihydroxy-isovalerate. In the isomerase reaction, S2AL is rearranged via a Mg-dependent methyl migration to produce 3-hydroxy-3-methyl-2-ketobutyrate (HMKB). In the reductase reaction, this 2-ketoacid undergoes a metal-dependent reduction by NADPH to yield (R)-2,3-dihydroxy-isovalerate. This chain is Ketol-acid reductoisomerase (NADP(+)), found in Leuconostoc mesenteroides subsp. mesenteroides (strain ATCC 8293 / DSM 20343 / BCRC 11652 / CCM 1803 / JCM 6124 / NCDO 523 / NBRC 100496 / NCIMB 8023 / NCTC 12954 / NRRL B-1118 / 37Y).